Here is a 602-residue protein sequence, read N- to C-terminus: Elongation factor 4 (602 aa).

The region spanning 7–189 (SKIRNFCIIA…AIVRRVPPPQ (183 aa)) is the tr-type G domain. GTP is bound by residues 19–24 (DHGKST) and 136–139 (NKVD).

The protein belongs to the TRAFAC class translation factor GTPase superfamily. Classic translation factor GTPase family. LepA subfamily.

The protein localises to the cell inner membrane. The enzyme catalyses GTP + H2O = GDP + phosphate + H(+). In terms of biological role, required for accurate and efficient protein synthesis under certain stress conditions. May act as a fidelity factor of the translation reaction, by catalyzing a one-codon backward translocation of tRNAs on improperly translocated ribosomes. Back-translocation proceeds from a post-translocation (POST) complex to a pre-translocation (PRE) complex, thus giving elongation factor G a second chance to translocate the tRNAs correctly. Binds to ribosomes in a GTP-dependent manner. In Prochlorococcus marinus (strain MIT 9301), this protein is Elongation factor 4.